A 311-amino-acid chain; its full sequence is Ribosomal RNA small subunit methyltransferase A (311 aa).

Asn-29, Val-31, Gly-56, Glu-77, Asp-107, and Asn-126 together coordinate S-adenosyl-L-methionine.

It belongs to the class I-like SAM-binding methyltransferase superfamily. rRNA adenine N(6)-methyltransferase family. RsmA subfamily.

The protein localises to the cytoplasm. The enzyme catalyses adenosine(1518)/adenosine(1519) in 16S rRNA + 4 S-adenosyl-L-methionine = N(6)-dimethyladenosine(1518)/N(6)-dimethyladenosine(1519) in 16S rRNA + 4 S-adenosyl-L-homocysteine + 4 H(+). Specifically dimethylates two adjacent adenosines (A1518 and A1519) in the loop of a conserved hairpin near the 3'-end of 16S rRNA in the 30S particle. May play a critical role in biogenesis of 30S subunits. In Mycolicibacterium vanbaalenii (strain DSM 7251 / JCM 13017 / BCRC 16820 / KCTC 9966 / NRRL B-24157 / PYR-1) (Mycobacterium vanbaalenii), this protein is Ribosomal RNA small subunit methyltransferase A.